Reading from the N-terminus, the 432-residue chain is Transcriptional adapter 3 (432 aa).

A Glycyl lysine isopeptide (Lys-Gly) (interchain with G-Cter in SUMO2) cross-link involves residue lysine 21. Residues 40–69 (IEELDTLQLELETLLSSASRRLRVLEAETQ) are a coiled coil. A disordered region spans residues 87-127 (ARDHELGAPPKHGKPKKQKLEGKTGHGPGPGPGRPKSKNVQ). A Glycyl lysine isopeptide (Lys-Gly) (interchain with G-Cter in SUMO2) cross-link involves residue lysine 129. Residues 272–319 (NIISPMEDSPIPDMSGKESGADGASTSPRNQNKPFSVPHTKSLESRIK) form a disordered region. Serine 280 and serine 298 each carry phosphoserine. The span at 295–305 (ASTSPRNQNKP) shows a compositional bias: polar residues. Residues 367–407 (LLRLAKEEVSRQELRQRVRMADNEVMDAFRKIMAARQKKRT) are a coiled coil. At lysine 418 the chain carries N6-acetyllysine.

This sequence belongs to the NGG1 family. In terms of assembly, the PCAF complex is composed of a number of TBP-associated factors (TAFS), such as TAF5, TAF5L, TAF6, TAF6L, TAF9, TAF10 and TAF12, PCAF, and also PCAF-associated factors (PAFs), such as TADA2L/ADA2, TADA3L/ADA3 and SPT3. Interacts directly with TADA2L and PCAF and also with the high-risk HPV oncoprotein E6. Component of the STAGA transcription coactivator-HAT complex, at least composed of SUPT3H, GCN5L2, TAF5L, TAF6L, SUPT7L, TADA3L, TAD1L, TAF10, TAF12, TRRAP and TAF9. Component of the TFTC-HAT complex. Component of the ADA2A-containing complex (ATAC), composed of KAT14, KAT2A, TADA2L, TADA3L, ZZ3, MBIP, WDR5, YEATS2, CCDC101 and DR1.

Its subcellular location is the nucleus. In terms of biological role, functions as a component of the PCAF complex. The PCAF complex is capable of efficiently acetylating histones in a nucleosomal context. The PCAF complex could be considered as the human version of the yeast SAGA complex. Also known as a coactivator for p53/TP53-dependent transcriptional activation. Component of the ATAC complex, a complex with histone acetyltransferase activity on histones H3 and H4. This chain is Transcriptional adapter 3 (Tada3), found in Rattus norvegicus (Rat).